The sequence spans 185 residues: Probable chorismate pyruvate-lyase (185 aa).

Residues R84, L122, and E178 each coordinate substrate.

It belongs to the UbiC family.

The protein localises to the cytoplasm. It catalyses the reaction chorismate = 4-hydroxybenzoate + pyruvate. Its pathway is cofactor biosynthesis; ubiquinone biosynthesis. Its function is as follows. Removes the pyruvyl group from chorismate, with concomitant aromatization of the ring, to provide 4-hydroxybenzoate (4HB) for the ubiquinone pathway. This is Probable chorismate pyruvate-lyase from Hydrogenovibrio crunogenus (strain DSM 25203 / XCL-2) (Thiomicrospira crunogena).